The primary structure comprises 192 residues: Leucyl/phenylalanyl-tRNA--protein transferase (192 aa).

Belongs to the L/F-transferase family.

The protein localises to the cytoplasm. The enzyme catalyses N-terminal L-lysyl-[protein] + L-leucyl-tRNA(Leu) = N-terminal L-leucyl-L-lysyl-[protein] + tRNA(Leu) + H(+). It carries out the reaction N-terminal L-arginyl-[protein] + L-leucyl-tRNA(Leu) = N-terminal L-leucyl-L-arginyl-[protein] + tRNA(Leu) + H(+). It catalyses the reaction L-phenylalanyl-tRNA(Phe) + an N-terminal L-alpha-aminoacyl-[protein] = an N-terminal L-phenylalanyl-L-alpha-aminoacyl-[protein] + tRNA(Phe). Functionally, functions in the N-end rule pathway of protein degradation where it conjugates Leu, Phe and, less efficiently, Met from aminoacyl-tRNAs to the N-termini of proteins containing an N-terminal arginine or lysine. The protein is Leucyl/phenylalanyl-tRNA--protein transferase of Synechococcus sp. (strain JA-3-3Ab) (Cyanobacteria bacterium Yellowstone A-Prime).